The following is a 438-amino-acid chain: Battenin (438 aa).

The tract at residues 1–29 (MGGCAGSRRRLLDSEEEETAPEPRPPRSY) is disordered. Over 1–37 (MGGCAGSRRRLLDSEEEETAPEPRPPRSYHKGALWKN) the chain is Cytoplasmic. Ser14 carries the phosphoserine modification. A helical membrane pass occupies residues 38–58 (VMGFWLLGLCNNFSYVVMLSA). The Lumenal portion of the chain corresponds to 59-127 (AHDILSHQRA…GLHLLPYSPR (69 aa)). A disordered region spans residues 68 to 89 (ASGNQSHVDPDPPPTAHNSSSR). Residues Asn71 and Asn85 are each glycosylated (N-linked (GlcNAc...) asparagine). A helical membrane pass occupies residues 128–148 (VLVSGICAAGSFILVAFSHSV). At 149-151 (GTS) the chain is on the cytoplasmic side. The helical transmembrane segment at 152-172 (LCGVVLASISSGVGEVTFLSL) threads the bilayer. At 173-182 (TAFYPRAVIS) the chain is on the lumenal side. The chain crosses the membrane as a helical span at residues 183–203 (WWSSGTGGAGLMGALSYLGLT). Residues 204 to 277 (QAGLSPQHTL…NLSLQERWTV (74 aa)) lie on the Cytoplasmic side of the membrane. A disordered region spans residues 236-267 (PQDPGGEEEAETSARQPLIDSETPESKPDSSS). Positions 242 to 244 (EEE) match the Lysosomal targeting motif motif. A Lysosomal targeting motif. Required for AP1G1, AP2A2 and AP3D1 interaction motif is present at residues 253-254 (LI). A helical membrane pass occupies residues 278–298 (FKGLLWYIVPLVLVYFAEYFI). The Lumenal portion of the chain corresponds to 299-346 (NQGLFELLFFRNTSLNHAQQYRWYQMLYQAGVFVSRSSLHCCRIRFTW). Asn310 carries N-linked (GlcNAc...) asparagine glycosylation. A helical transmembrane segment spans residues 347–367 (VLALLQCLNLAFLLVDVWFSF). The Cytoplasmic portion of the chain corresponds to 368-438 (LPSIYLVFLI…PLHDFLCHLS (71 aa)). Positions 409–419 (MAAACISDTLG) match the Lysosomal targeting motif motif. Residue Cys435 is modified to Cysteine methyl ester. The S-farnesyl cysteine moiety is linked to residue Cys435. A propeptide spans 436-438 (HLS) (removed in mature form).

Belongs to the battenin family. In terms of assembly, interacts with DCTN1, KIF3A, RAB7A and RILP. Interacts with CLN5. In terms of processing, highly glycosylated. Post-translationally, farnesylation is important for trafficking to lysosomes.

It is found in the lysosome membrane. The protein localises to the late endosome. The protein resides in the lysosome. Its function is as follows. Mediates microtubule-dependent, anterograde transport connecting the Golgi network, endosomes, autophagosomes, lysosomes and plasma membrane, and participates in several cellular processes such as regulation of lysosomal pH, lysosome protein degradation, receptor-mediated endocytosis, autophagy, transport of proteins and lipids from the TGN, apoptosis and synaptic transmission. Facilitates the proteins transport from trans-Golgi network (TGN)-to other membrane compartments such as transport of microdomain-associated proteins to the plasma membrane, IGF2R transport to the lysosome where it regulates the CTSD release leading to regulation of CTSD maturation and thereby APP intracellular processing. Moreover regulates CTSD activity in response to osmotic stress. Also binds galactosylceramide and transports it from the trans Golgi to the rafts, which may have immediate and downstream effects on cell survival by modulating ceramide synthesis. At the plasma membrane, regulates actin-dependent events including filopodia formation, cell migration, and pinocytosis through ARF1-CDC42 pathway and also the cytoskeleton organization through interaction with MYH10 and fodrin leading to the regulation of the plasma membrane association of Na+, K+ ATPase complex. Regulates synaptic transmission in the amygdala, hippocampus, and cerebellum through regulation of synaptic vesicles density and their proximity to active zones leading to modulation of short-term plasticity and age-dependent anxious behavior, learning and memory. Regulates autophagic vacuoles (AVs) maturation by modulating the trafficking between endocytic and autophagolysosomal/lysosomal compartments, which involves vesicle fusion leading to regulation of degradation process. Also participates in cellular homeostasis of compounds such as, water, ions, amino acids, proteins and lipids in several tissue namely in brain and kidney through regulation of their transport and synthesis. The polypeptide is Battenin (Canis lupus familiaris (Dog)).